Here is a 275-residue protein sequence, read N- to C-terminus: Large ribosomal subunit protein uL2 (275 aa).

The disordered stretch occupies residues 210 to 275 (GRNRHRGIRP…DKLIISRKKK (66 aa)). Basic residues predominate over residues 257-275 (FKTRKKKASDKLIISRKKK).

The protein belongs to the universal ribosomal protein uL2 family. Part of the 50S ribosomal subunit. Forms a bridge to the 30S subunit in the 70S ribosome.

Its function is as follows. One of the primary rRNA binding proteins. Required for association of the 30S and 50S subunits to form the 70S ribosome, for tRNA binding and peptide bond formation. It has been suggested to have peptidyltransferase activity; this is somewhat controversial. Makes several contacts with the 16S rRNA in the 70S ribosome. This chain is Large ribosomal subunit protein uL2, found in Helicobacter hepaticus (strain ATCC 51449 / 3B1).